Here is a 519-residue protein sequence, read N- to C-terminus: ATP synthase subunit alpha, mitochondrial (519 aa).

188–195 provides a ligand contact to ATP; it reads GDRQTGKS.

The protein belongs to the ATPase alpha/beta chains family. As to quaternary structure, F-type ATPases have 2 components, CF(1) - the catalytic core - and CF(0) - the membrane proton channel. CF(1) has five subunits: alpha(3), beta(3), gamma(1), delta(1), epsilon(1). CF(0) has three main subunits: a, b and c.

The protein resides in the mitochondrion. It is found in the mitochondrion inner membrane. Mitochondrial membrane ATP synthase (F(1)F(0) ATP synthase or Complex V) produces ATP from ADP in the presence of a proton gradient across the membrane which is generated by electron transport complexes of the respiratory chain. F-type ATPases consist of two structural domains, F(1) - containing the extramembraneous catalytic core, and F(0) - containing the membrane proton channel, linked together by a central stalk and a peripheral stalk. During catalysis, ATP synthesis in the catalytic domain of F(1) is coupled via a rotary mechanism of the central stalk subunits to proton translocation. Subunits alpha and beta form the catalytic core in F(1). Rotation of the central stalk against the surrounding alpha(3)beta(3) subunits leads to hydrolysis of ATP in three separate catalytic sites on the beta subunits. Subunit alpha does not bear the catalytic high-affinity ATP-binding sites. The chain is ATP synthase subunit alpha, mitochondrial (atp1) from Dictyostelium citrinum (Slime mold).